Consider the following 635-residue polypeptide: Beta-mannosyltransferase 2 (635 aa).

Residues 1-6 (MRTRLN) lie on the Cytoplasmic side of the membrane. Residues 7 to 27 (FLLLCIASVLSVIWIGVLLTW) form a helical membrane-spanning segment. Over 28–635 (NDNNLGGISL…EKKEAEKKGK (608 aa)) the chain is Extracellular. A glycan (N-linked (GlcNAc...) asparagine) is linked at Asn484. Positions 512–635 (TRGEAERRRR…EKKEAEKKGK (124 aa)) form a coiled coil. The interval 517–635 (ERRRRVAEER…EKKEAEKKGK (119 aa)) is disordered.

Belongs to the BMT family.

It localises to the membrane. Functionally, beta-mannosyltransferase involved in cell wall biosynthesis. Initiates the beta-mannosylation of core N-linked glycans. This Komagataella phaffii (strain ATCC 76273 / CBS 7435 / CECT 11047 / NRRL Y-11430 / Wegner 21-1) (Yeast) protein is Beta-mannosyltransferase 2 (BMT2).